We begin with the raw amino-acid sequence, 881 residues long: Valine--tRNA ligase (881 aa).

The 'HIGH' region motif lies at 49-59 (PNVTGKLHLGH). Positions 526 to 530 (KMSKS) match the 'KMSKS' region motif. Lys-529 contacts ATP. Positions 810–881 (LADLINLDEE…VRQRLADLEK (72 aa)) form a coiled coil.

This sequence belongs to the class-I aminoacyl-tRNA synthetase family. ValS type 1 subfamily. Monomer.

Its subcellular location is the cytoplasm. It carries out the reaction tRNA(Val) + L-valine + ATP = L-valyl-tRNA(Val) + AMP + diphosphate. In terms of biological role, catalyzes the attachment of valine to tRNA(Val). As ValRS can inadvertently accommodate and process structurally similar amino acids such as threonine, to avoid such errors, it has a 'posttransfer' editing activity that hydrolyzes mischarged Thr-tRNA(Val) in a tRNA-dependent manner. The polypeptide is Valine--tRNA ligase (Bacillus cereus (strain ATCC 10987 / NRS 248)).